The chain runs to 1250 residues: DNA topoisomerase 3-alpha (1250 aa).

The Toprim domain maps to 27 to 171 (KYLNVAEKND…NISVYRATFS (145 aa)). The 422-residue stretch at 189 to 610 (DKRQSDAVDV…EQIAKYKQAY (422 aa)) folds into the Topo IA-type catalytic domain. Y356 functions as the O-(5'-phospho-DNA)-tyrosine intermediate in the catalytic mechanism. Gly residues predominate over residues 769 to 835 (RGGGGGPGPG…GTGGGGLGGG (67 aa)). 2 disordered regions span residues 769-899 (RGGG…GLDE) and 953-1035 (NGGT…TVLC). Residues 840–865 (PGGESKKSATKKPPNEPKPKKTKEPK) are compositionally biased toward basic and acidic residues. A compositionally biased stretch (low complexity) spans 866-886 (AAPNKKTSSKSSGSIRSFFTS). Polar residues predominate over residues 956 to 965 (TMPTESNGDQ). Composition is skewed to basic and acidic residues over residues 966 to 994 (QLDKSLSEWIKEQDKADERPMLWGTRERA) and 1012 to 1021 (PRWDSVERDS). Positions 1022–1033 (TPPSSVPESETV) are enriched in low complexity. The Zn(2+) site is built by C1035, C1038, C1061, and C1067. The GRF-type 1 zinc-finger motif lies at 1035 to 1076 (CTGCQQPARQNTVRKNGPNLGRLYYKCPKPDECNFFQWADEP). The disordered stretch occupies residues 1069-1150 (FFQWADEPPS…TATPGDGEEV (82 aa)). Residues 1079 to 1101 (SAKSKNSTGSAPQSTTSWGSNRV) are compositionally biased toward polar residues. Residues 1106 to 1134 (SIQQSNSQRGQSSMRSNSSSTVTITQTKT) are compositionally biased toward low complexity. Zn(2+) is bound by residues C1152, C1154, C1177, and C1184. A GRF-type 2 zinc finger spans residues 1152–1193 (CNCGQLASQLTVRKDGPNQGRPFYACPTREKSCGFFKWGDED). The tract at residues 1188-1231 (KWGDEDQNQGASSTSWGSANRNPPGRSQPTAITSDGPKTRRCGL) is disordered. Residues 1195-1220 (NQGASSTSWGSANRNPPGRSQPTAIT) show a composition bias toward polar residues.

The protein belongs to the type IA topoisomerase family.

It catalyses the reaction ATP-independent breakage of single-stranded DNA, followed by passage and rejoining.. Its function is as follows. Releases the supercoiling and torsional tension of DNA introduced during the DNA replication and transcription by transiently cleaving and rejoining one strand of the DNA duplex. Introduces a single-strand break via transesterification at a target site in duplex DNA. The scissile phosphodiester is attacked by the catalytic tyrosine of the enzyme, resulting in the formation of a DNA-(5'-phosphotyrosyl)-enzyme intermediate and the expulsion of a 3'-OH DNA strand. The free DNA strand than undergoes passage around the unbroken strand thus removing DNA supercoils. Finally, in the religation step, the DNA 3'-OH attacks the covalent intermediate to expel the active-site tyrosine and restore the DNA phosphodiester backbone. Weakly relaxes negative supercoils and displays a distinct preference for binding single-stranded DNA. The sequence is that of DNA topoisomerase 3-alpha (Top3alpha) from Drosophila melanogaster (Fruit fly).